The following is a 781-amino-acid chain: LPS-assembly protein LptD (781 aa).

The signal sequence occupies residues 1 to 24 (MKKNYYTVLSLSILTALYSTSSQA).

The protein belongs to the LptD family. In terms of assembly, component of the lipopolysaccharide transport and assembly complex. Interacts with LptE and LptA.

The protein resides in the cell outer membrane. Its function is as follows. Together with LptE, is involved in the assembly of lipopolysaccharide (LPS) at the surface of the outer membrane. This chain is LPS-assembly protein LptD, found in Histophilus somni (strain 129Pt) (Haemophilus somnus).